Here is a 193-residue protein sequence, read N- to C-terminus: Acyl carrier protein phosphodiesterase (193 aa).

This sequence belongs to the AcpH family.

The enzyme catalyses holo-[ACP] + H2O = apo-[ACP] + (R)-4'-phosphopantetheine + H(+). Converts holo-ACP to apo-ACP by hydrolytic cleavage of the phosphopantetheine prosthetic group from ACP. In Salmonella newport (strain SL254), this protein is Acyl carrier protein phosphodiesterase.